Here is an 854-residue protein sequence, read N- to C-terminus: Armadillo repeat-containing protein 2 (854 aa).

Disordered stretches follow at residues 1 to 116 (MLSS…SFPK), 140 to 194 (QGML…PLLT), and 206 to 255 (EVSL…ETDT). Over residues 58 to 73 (PASSRSPENRPPSSFS) the composition is skewed to low complexity. Composition is skewed to polar residues over residues 74–87 (LHASSFELSDSKPI) and 162–187 (KPVSVGSSTARRNGTHLTASSATGQL). 12 ARM repeats span residues 255-294 (TEVDEVFWKARIVPILHELENEEDIEEMCAACTQLHRTLE), 298-337 (MLGKKFKRRTVLLKALYKLVDADSDPLSLKLAKLILALKV), 356-396 (EKND…ALKF), 401-442 (PGFL…HLLV), 455-496 (PLTR…KLTS), 499-540 (DCCA…NLTA), 544-583 (QARELFSRETGSVETLLTLFQSFYHHKENSPKLQLSEAKP), 585-605 (AEAEDVLVKLTRVLANIAIHP), 606-649 (RIGP…NLSF), 651-692 (QVKS…NLSQ), 694-733 (HDVCNFLMQKNVHKFMITLLEAKHQDICFSACGVLLNLTV), and 735-777 (KEKR…NFSE).

Required for sperm flagellum axoneme organization and function. Involved in axonemal central pair complex assembly and/or stability. In Mus musculus (Mouse), this protein is Armadillo repeat-containing protein 2.